The primary structure comprises 143 residues: Large ribosomal subunit protein uL11 (143 aa).

Belongs to the universal ribosomal protein uL11 family. Part of the ribosomal stalk of the 50S ribosomal subunit. Interacts with L10 and the large rRNA to form the base of the stalk. L10 forms an elongated spine to which L12 dimers bind in a sequential fashion forming a multimeric L10(L12)X complex. Post-translationally, one or more lysine residues are methylated.

In terms of biological role, forms part of the ribosomal stalk which helps the ribosome interact with GTP-bound translation factors. This Nitrosomonas eutropha (strain DSM 101675 / C91 / Nm57) protein is Large ribosomal subunit protein uL11.